Here is a 245-residue protein sequence, read N- to C-terminus: Probable phosphatase YcdX (245 aa).

Positions 7, 9, 15, 40, 73, 101, 131, 192, and 194 each coordinate Zn(2+).

It belongs to the PHP family. As to quaternary structure, homotrimer. It depends on Zn(2+) as a cofactor.

The protein is Probable phosphatase YcdX of Escherichia coli O139:H28 (strain E24377A / ETEC).